We begin with the raw amino-acid sequence, 515 residues long: Glucose-6-phosphate 1-dehydrogenase (515 aa).

Ala-2 is subject to N-acetylalanine. Ser-8 is modified (phosphoserine). Thr-10 carries the post-translational modification Phosphothreonine. Residues 38–45 and Arg-72 each bind NADP(+); that span reads GASGDLAK. At Lys-89 the chain carries N6-acetyllysine. The NADP(+) site is built by Tyr-147 and Lys-171. D-glucose 6-phosphate contacts are provided by residues Lys-171, 201–205, Glu-239, and Asp-258; that span reads HYLGK. An N6-(2-hydroxyisobutyryl)lysine; alternate modification is found at Lys-171. Lys-171 is modified (N6-acetyllysine; alternate). His-263 (proton acceptor) is an active-site residue. Arg-357 contacts NADP(+). 2 residues coordinate D-glucose 6-phosphate: Lys-360 and Arg-365. 3 residues coordinate NADP(+): Lys-366, Arg-370, and Arg-393. Gln-395 lines the D-glucose 6-phosphate pocket. NADP(+)-binding positions include 401 to 403 and 421 to 423; these read YTK and DLT. At Lys-403 the chain carries N6-acetyllysine. Lys-432 bears the N6-acetyllysine mark. Arg-487 provides a ligand contact to NADP(+). At Lys-497 the chain carries N6-acetyllysine. Positions 503 and 509 each coordinate NADP(+). Tyr-503 bears the Phosphotyrosine mark.

Belongs to the glucose-6-phosphate dehydrogenase family. In terms of assembly, homotetramer; dimer of dimers. Interacts with SIRT2; the interaction is enhanced by H(2)O(2) treatment. Forms a ternary complex with ALDOB and TP53; this interaction is direct. ALDOB stabilizes the complex inhibiting G6PD activity and keeping oxidative pentose phosphate metabolism in check. Post-translationally, acetylated by ELP3 at Lys-403; acetylation inhibits its homodimerization and enzyme activity. Deacetylated by SIRT2 at Lys-403; deacetylation stimulates its enzyme activity.

The protein resides in the cytoplasm. Its subcellular location is the cytosol. It is found in the membrane. The enzyme catalyses D-glucose 6-phosphate + NADP(+) = 6-phospho-D-glucono-1,5-lactone + NADPH + H(+). It participates in carbohydrate degradation; pentose phosphate pathway; D-ribulose 5-phosphate from D-glucose 6-phosphate (oxidative stage): step 1/3. Cytosolic glucose-6-phosphate dehydrogenase that catalyzes the first and rate-limiting step of the oxidative branch within the pentose phosphate pathway/shunt, an alternative route to glycolysis for the dissimilation of carbohydrates and a major source of reducing power and metabolic intermediates for fatty acid and nucleic acid biosynthetic processes. In Cricetulus griseus (Chinese hamster), this protein is Glucose-6-phosphate 1-dehydrogenase (G6PD).